Reading from the N-terminus, the 186-residue chain is Inosine/xanthosine triphosphatase (186 aa).

Mg(2+) is bound at residue glutamine 75.

This sequence belongs to the YjjX NTPase family. Homodimer. It depends on Mg(2+) as a cofactor. The cofactor is Mn(2+).

It carries out the reaction XTP + H2O = XDP + phosphate + H(+). It catalyses the reaction ITP + H2O = IDP + phosphate + H(+). Functionally, phosphatase that hydrolyzes non-canonical purine nucleotides such as XTP and ITP to their respective diphosphate derivatives. Probably excludes non-canonical purines from DNA/RNA precursor pool, thus preventing their incorporation into DNA/RNA and avoiding chromosomal lesions. This Shewanella baltica (strain OS185) protein is Inosine/xanthosine triphosphatase.